A 431-amino-acid polypeptide reads, in one-letter code: Glucose-1-phosphate adenylyltransferase (431 aa).

A beta-D-fructose 1,6-bisphosphate-binding site is contributed by lysine 39. Residues arginine 40, histidine 46, and arginine 52 each contribute to the AMP site. Tyrosine 114 contacts alpha-D-glucose 1-phosphate. Position 130 (arginine 130) interacts with AMP. Alpha-D-glucose 1-phosphate contacts are provided by residues glycine 179, 194–195, and serine 212; that span reads EK. Arginine 386 contributes to the AMP binding site. 429–431 is a beta-D-fructose 1,6-bisphosphate binding site; sequence QER.

The protein belongs to the bacterial/plant glucose-1-phosphate adenylyltransferase family. Homotetramer.

The catalysed reaction is alpha-D-glucose 1-phosphate + ATP + H(+) = ADP-alpha-D-glucose + diphosphate. It participates in glycan biosynthesis; glycogen biosynthesis. With respect to regulation, allosterically activated by fructose-1,6-bisphosphate (F16BP) and inhibited by AMP. Functionally, involved in the biosynthesis of ADP-glucose, a building block required for the elongation reactions to produce glycogen. Catalyzes the reaction between ATP and alpha-D-glucose 1-phosphate (G1P) to produce pyrophosphate and ADP-Glc. In Klebsiella pneumoniae subsp. pneumoniae (strain ATCC 700721 / MGH 78578), this protein is Glucose-1-phosphate adenylyltransferase.